Reading from the N-terminus, the 205-residue chain is Holliday junction branch migration complex subunit RuvA (205 aa).

A domain I region spans residues 1–64 (MIGKLKGLID…EDQIKLFGFR (64 aa)). Residues 65–143 (SDLEREWFRL…AFASVDPAVV (79 aa)) form a domain II region. A flexible linker region spans residues 144 to 153 (ALSGALDERS). The segment at 153-205 (SAPRPVTDAISALVNLGYGQPQAAAAIASASRSAGEGAETAQLIKLGLKELSK) is domain III.

This sequence belongs to the RuvA family. As to quaternary structure, homotetramer. Forms an RuvA(8)-RuvB(12)-Holliday junction (HJ) complex. HJ DNA is sandwiched between 2 RuvA tetramers; dsDNA enters through RuvA and exits via RuvB. An RuvB hexamer assembles on each DNA strand where it exits the tetramer. Each RuvB hexamer is contacted by two RuvA subunits (via domain III) on 2 adjacent RuvB subunits; this complex drives branch migration. In the full resolvosome a probable DNA-RuvA(4)-RuvB(12)-RuvC(2) complex forms which resolves the HJ.

The protein resides in the cytoplasm. In terms of biological role, the RuvA-RuvB-RuvC complex processes Holliday junction (HJ) DNA during genetic recombination and DNA repair, while the RuvA-RuvB complex plays an important role in the rescue of blocked DNA replication forks via replication fork reversal (RFR). RuvA specifically binds to HJ cruciform DNA, conferring on it an open structure. The RuvB hexamer acts as an ATP-dependent pump, pulling dsDNA into and through the RuvAB complex. HJ branch migration allows RuvC to scan DNA until it finds its consensus sequence, where it cleaves and resolves the cruciform DNA. This Rhodopseudomonas palustris (strain BisB18) protein is Holliday junction branch migration complex subunit RuvA.